A 462-amino-acid chain; its full sequence is Phosphoglucosamine mutase (462 aa).

Ser111 functions as the Phosphoserine intermediate in the catalytic mechanism. 4 residues coordinate Mg(2+): Ser111, Asp250, Asp252, and Asp254. Ser111 bears the Phosphoserine mark.

It belongs to the phosphohexose mutase family. The cofactor is Mg(2+). In terms of processing, activated by phosphorylation.

The catalysed reaction is alpha-D-glucosamine 1-phosphate = D-glucosamine 6-phosphate. Catalyzes the conversion of glucosamine-6-phosphate to glucosamine-1-phosphate. In Synechococcus sp. (strain WH7803), this protein is Phosphoglucosamine mutase.